The sequence spans 441 residues: DNA primase DnaG (441 aa).

The region spanning 165 to 241 (DTIIIVEGRA…DIDYVARAPP (77 aa)) is the Toprim domain. The Mg(2+) site is built by E171, D215, and D217. The span at 299–315 (KEEVAERGEEMESKAEG) shows a compositional bias: basic and acidic residues. The interval 299-320 (KEEVAERGEEMESKAEGAEQPT) is disordered.

It belongs to the archaeal DnaG primase family. As to quaternary structure, forms a ternary complex with MCM helicase and DNA. Component of the archaeal exosome complex. Mg(2+) is required as a cofactor.

It carries out the reaction ssDNA + n NTP = ssDNA/pppN(pN)n-1 hybrid + (n-1) diphosphate.. Its function is as follows. RNA polymerase that catalyzes the synthesis of short RNA molecules used as primers for DNA polymerase during DNA replication. Also part of the exosome, which is a complex involved in RNA degradation. Acts as a poly(A)-binding protein that enhances the interaction between heteromeric, adenine-rich transcripts and the exosome. In Ignicoccus hospitalis (strain KIN4/I / DSM 18386 / JCM 14125), this protein is DNA primase DnaG.